The sequence spans 101 residues: ATP synthase subunit f, mitochondrial (101 aa).

The transit peptide at 1–6 (MIFKRA) directs the protein to the mitochondrion.

The protein belongs to the ATPase F chain family. As to quaternary structure, F-type ATPases have 2 components, CF(1) - the catalytic core - and CF(0) - the membrane proton channel. In yeast, the dimeric form of ATP synthase consists of 17 polypeptides: alpha, beta, gamma, delta, epsilon, 4 (B), 5 (OSCP), 6 (A), 8, 9 (C), d, E (Tim11), f, g, h, i/j and k.

The protein resides in the mitochondrion. The protein localises to the mitochondrion inner membrane. Functionally, mitochondrial membrane ATP synthase (F(1)F(0) ATP synthase or Complex V) produces ATP from ADP in the presence of a proton gradient across the membrane which is generated by electron transport complexes of the respiratory chain. F-type ATPases consist of two structural domains, F(1) - containing the extramembraneous catalytic core and F(0) - containing the membrane proton channel, linked together by a central stalk and a peripheral stalk. During catalysis, ATP synthesis in the catalytic domain of F(1) is coupled via a rotary mechanism of the central stalk subunits to proton translocation. Part of the complex F(0) domain. Minor subunit located with subunit a in the membrane. This is ATP synthase subunit f, mitochondrial (ATP17) from Saccharomyces cerevisiae (strain ATCC 204508 / S288c) (Baker's yeast).